The chain runs to 377 residues: Progesterone receptor (377 aa).

The interval 1–15 (EASQSPQYSFESLPQ) is modulating, Pro-Rich. Positions 16–90 (KICLICGDEA…AGMVLGGRKF (75 aa)) form a DNA-binding region, nuclear receptor. NR C4-type zinc fingers lie at residues 18 to 38 (CLICGDEASGCHYGVLTCGSC) and 54 to 78 (CAGRNDCIVDKIRRKNCPACRLRKC). Ser127 bears the Phosphoserine mark. The region spanning 130-364 (QDLQLIPPLI…EFPEMMSEVI (235 aa)) is the NR LBD domain. The interval 138–377 (LINLLMSIEP…LPKILAGMVK (240 aa)) is AF2; mediates transcriptional activation.

This sequence belongs to the nuclear hormone receptor family. NR3 subfamily. In terms of assembly, interacts with CUEDC2, SMARD1 and with UNC45A. Interacts with PRMT2. Interacts with NCOA2 and NCOA1. Interacts with KLF9. Interacts with GTF2B. In terms of processing, palmitoylated by ZDHHC7 and ZDHHC21. Palmitoylation is required for plasma membrane targeting and for rapid intracellular signaling via ERK and AKT kinases and cAMP generation.

It is found in the nucleus. In terms of biological role, the steroid hormones and their receptors are involved in the regulation of eukaryotic gene expression and affect cellular proliferation and differentiation in target tissues. Transcriptional activator of several progesteron-dependent promoters in a variety of cell types. Involved in activation of SRC-dependent MAPK signaling on hormone stimulation. In Ovis aries (Sheep), this protein is Progesterone receptor (PGR).